The following is a 242-amino-acid chain: 2-C-methyl-D-erythritol 4-phosphate cytidylyltransferase (242 aa).

This sequence belongs to the IspD/TarI cytidylyltransferase family. IspD subfamily.

It catalyses the reaction 2-C-methyl-D-erythritol 4-phosphate + CTP + H(+) = 4-CDP-2-C-methyl-D-erythritol + diphosphate. It functions in the pathway isoprenoid biosynthesis; isopentenyl diphosphate biosynthesis via DXP pathway; isopentenyl diphosphate from 1-deoxy-D-xylulose 5-phosphate: step 2/6. In terms of biological role, catalyzes the formation of 4-diphosphocytidyl-2-C-methyl-D-erythritol from CTP and 2-C-methyl-D-erythritol 4-phosphate (MEP). The chain is 2-C-methyl-D-erythritol 4-phosphate cytidylyltransferase from Shewanella loihica (strain ATCC BAA-1088 / PV-4).